Consider the following 868-residue polypeptide: MADVTVKQLAQVVGIPVERLLNQLQEAGLSFTDDQQTVNEEQKRILLNHLKGSSNRDISAAPERITLRRKSMSQVTVGHDMHSGKTVNIEVRKKKTFIKRSAIPEQAEVEEPVVPPVVEEPVHEEITVVSEVSAETPELKETEEHPVIEPVAELDETVKEEEKINSEENTAESQDELTHANTDVIENLVDVVEETIPVSKKEEVKPEKVSKKKHLEQTDSDISEFKKGKKKPKYHTFEHDEEEQELHRRGGRSKFKKKKGTEKSDKYREAEETLTHGFALPTAPIVREVLIPETITVAELAKRMSVKAAEVIKVMMSLGAMATINQVIDQETSVIVVEEMGHKPIIIKEDAVETGLGEAISKGTKTEGRAPVVTIMGHVDHGKTSLLDYIRRTKVAAGEAGGITQHIGAYHVSTPKGNITFLDTPGHAAFTAMRARGAQATDIVILIVAADDGVKPQTIEAIQHAKAAKVPIIVAINKMDKPDADPERVMNELSVQEVIPEAWGGDTMFVNISAKSGMGIDDLLDAILLQSEVLELKAVTDGAAKGVVIESRLDKGRGPVATVLVQSGTLHKGDILLAGFQYGRVRALVSDNGDLVDSAGPSIPVEVLGLSAIPHAGDEAVVVPDEKKAREVALFRQGRFRDVKLARRQKTTIEGIMENMTATESKVLNIVLKADVQGSLEAISDALTKLSTDEVKVDVISSGVGGITESDVHLAIASNAILIGFNVRADGTAKRLAEQESVSIHYYSVIYDIVDQIKGALTGMLAPQFKEEIVGIAEVRDVFKSPKIGAIAGCMVIEGVVKRNNPIRVLRSNVVIYEGTLESLRRFKDDVLEVRQGFECGIGVKNYNDVKPGDLIEVFETVEIKRDL.

Basic and acidic residues-rich tracts occupy residues 156–166 and 199–209; these read ETVKEEEKINS and SKKEEVKPEKV. 2 disordered regions span residues 156 to 177 and 199 to 269; these read ETVK…QDEL and SKKE…KYRE. Over residues 249–260 the composition is skewed to basic residues; the sequence is RGGRSKFKKKKG. Residues 368-537 form the tr-type G domain; it reads GRAPVVTIMG…LLQSEVLELK (170 aa). The tract at residues 377 to 384 is G1; the sequence is GHVDHGKT. 377-384 is a binding site for GTP; sequence GHVDHGKT. The segment at 402–406 is G2; that stretch reads GITQH. The tract at residues 423–426 is G3; it reads DTPG. GTP contacts are provided by residues 423–427 and 477–480; these read DTPGH and NKMD. Residues 477–480 are G4; sequence NKMD. Positions 513-515 are G5; that stretch reads SAK.

The protein belongs to the TRAFAC class translation factor GTPase superfamily. Classic translation factor GTPase family. IF-2 subfamily.

It is found in the cytoplasm. Functionally, one of the essential components for the initiation of protein synthesis. Protects formylmethionyl-tRNA from spontaneous hydrolysis and promotes its binding to the 30S ribosomal subunits. Also involved in the hydrolysis of GTP during the formation of the 70S ribosomal complex. This is Translation initiation factor IF-2 from Legionella pneumophila subsp. pneumophila (strain Philadelphia 1 / ATCC 33152 / DSM 7513).